Reading from the N-terminus, the 131-residue chain is uncharacterized protein (131 aa).

Residues 112–131 form a disordered region; sequence LTDNPGAVRKSQKSLIPPYN.

This is an uncharacterized protein from Fowl adenovirus A serotype 1 (strain CELO / Phelps) (FAdV-1).